The sequence spans 391 residues: Sister chromatid cohesion protein DCC1 (391 aa).

Belongs to the DCC1 family. Component of the ctf18-RFC complex which consists of ctf18, ctf8, dscc1 and the RFC complex.

It localises to the nucleus. In terms of biological role, loads pcna onto primed templates regulating velocity, spacing and restart activity of replication forks. May couple DNA replication to sister chromatid cohesion. In Danio rerio (Zebrafish), this protein is Sister chromatid cohesion protein DCC1 (dscc1).